A 534-amino-acid chain; its full sequence is Probable alkaline/neutral invertase D (534 aa).

2 positions are modified to phosphoserine: serine 7 and serine 37. Threonine 55 is subject to Phosphothreonine. Serine 532 carries the phosphoserine modification.

It belongs to the glycosyl hydrolase 100 family.

The catalysed reaction is Hydrolysis of terminal non-reducing beta-D-fructofuranoside residues in beta-D-fructofuranosides.. Invertase that cleaves sucrose into glucose and fructose. The polypeptide is Probable alkaline/neutral invertase D (Arabidopsis thaliana (Mouse-ear cress)).